Here is a 791-residue protein sequence, read N- to C-terminus: Protein SEY1 (791 aa).

Over 1–685 the chain is Cytoplasmic; that stretch reads MSEDGASKCQ…KRSTIKSHTH (685 aa). The region spanning 40-268 is the GB1/RHD3-type G domain; it reads GLDYHVISVF…REDYYLSGKY (229 aa). Residue 50–57 coordinates GTP; sequence GSQSSGKS. A helical membrane pass occupies residues 686–706; the sequence is IPMWIYAIIAVLGWNEFMLVL. The Lumenal portion of the chain corresponds to 707-709; it reads RNP. A helical membrane pass occupies residues 710–730; that stretch reads LFIALMLLIVGAAYTVHRLNL. Topologically, residues 731-791 are cytoplasmic; sequence WTPLATFASA…NETKENANES (61 aa). A disordered region spans residues 763-791; the sequence is PKNASSKPVESFEMQDLSVNETKENANES.

It belongs to the TRAFAC class dynamin-like GTPase superfamily. GB1/RHD3 GTPase family. RHD3 subfamily.

The protein localises to the endoplasmic reticulum membrane. In terms of biological role, cooperates with the reticulon proteins and tubule-shaping DP1 family proteins to generate and maintain the structure of the tubular endoplasmic reticulum network. Has GTPase activity, which is required for its function in ER organization. In Eremothecium gossypii (strain ATCC 10895 / CBS 109.51 / FGSC 9923 / NRRL Y-1056) (Yeast), this protein is Protein SEY1.